The chain runs to 1903 residues: Plexin-A4 (1903 aa).

The first 26 residues, 1 to 26 (MAFHNRRWNFTFSCCVVVLLLPLVAA), serve as a signal peptide directing secretion. Residues 27-515 (RPQQPSAATR…SESQLTRVPV (489 aa)) form the Sema domain. Residues 27-1246 (RPQQPSAATR…ITSDSPLSST (1220 aa)) are Extracellular-facing. 2 disulfide bridges follow: cysteine 97–cysteine 106 and cysteine 132–cysteine 140. Asparagine 166 carries an N-linked (GlcNAc...) asparagine glycan. Disulfide bonds link cysteine 291-cysteine 413, cysteine 307-cysteine 364, and cysteine 382-cysteine 401. Asparagine 450 carries an N-linked (GlcNAc...) asparagine glycan. The 51-residue stretch at 517–567 (ACEQYSSCNECLGSGDPHCGWCVLHSMCTRKEKCERSSEPRRFASNIKQCV) folds into the PSI 1 domain. 4 cysteine pairs are disulfide-bonded: cysteine 518–cysteine 535, cysteine 524–cysteine 566, cysteine 527–cysteine 544, and cysteine 538–cysteine 550. N-linked (GlcNAc...) asparagine glycosylation is found at asparagine 575 and asparagine 600. Cysteines 601 and 620 form a disulfide. Asparagine 656, asparagine 663, asparagine 764, and asparagine 772 each carry an N-linked (GlcNAc...) asparagine glycan. One can recognise a PSI 2 domain in the interval 663–710 (NCSVHKSCLSCVGSPYQCHWCKYRHTCTHDPSSCSFQEGRVKQPEECP). The region spanning 811 to 864 (KCDARRESCGLCLKADPLFGCVWCKGENRCSLKQHCSYPQSMWLEHNGINSKCT) is the PSI 3 domain. 4 IPT/TIG domains span residues 866–960 (PRIT…YYFV), 962–1046 (PQLL…FEYV), 1049–1148 (PTIT…FVYY), and 1151–1246 (PVFE…LSST). 6 N-linked (GlcNAc...) asparagine glycosylation sites follow: asparagine 981, asparagine 992, asparagine 1025, asparagine 1141, asparagine 1189, and asparagine 1214. Residues 1247–1267 (AVISIAGAGGLLIFFIVIVLI) traverse the membrane as a helical segment. Residues 1268–1903 (AYKRKSRESD…QVVAFMSLES (636 aa)) are Cytoplasmic-facing.

Belongs to the plexin family.

The protein localises to the cell membrane. Its function is as follows. Involved in the development of primary sensory neurons especially in branching of the peripheral axons. Interacts with the SLIT2 signaling specifically to promote axonal branching of Rohon-Beard neurons and the trigeminal sensory ganglion neurons. The polypeptide is Plexin-A4 (plxna4) (Danio rerio (Zebrafish)).